A 788-amino-acid polypeptide reads, in one-letter code: Endonuclease MutS2 (788 aa).

332–339 (GPNTGGKT) contributes to the ATP binding site. Residues 713–788 (VDLRGMDAEE…GTGVTVVELK (76 aa)) form the Smr domain.

It belongs to the DNA mismatch repair MutS family. MutS2 subfamily. As to quaternary structure, homodimer. Binds to stalled ribosomes, contacting rRNA.

In terms of biological role, endonuclease that is involved in the suppression of homologous recombination and thus may have a key role in the control of bacterial genetic diversity. Acts as a ribosome collision sensor, splitting the ribosome into its 2 subunits. Detects stalled/collided 70S ribosomes which it binds and splits by an ATP-hydrolysis driven conformational change. Acts upstream of the ribosome quality control system (RQC), a ribosome-associated complex that mediates the extraction of incompletely synthesized nascent chains from stalled ribosomes and their subsequent degradation. Probably generates substrates for RQC. The sequence is that of Endonuclease MutS2 from Clostridium botulinum (strain Kyoto / Type A2).